A 1132-amino-acid chain; its full sequence is Tyrosine-protein kinase JAK2 (1132 aa).

Residues 1–239 (MGMACLTMTE…RYRFRRFIQQ (239 aa)) are interaction with cytokine/interferon/growth hormone receptors. Residues 37-380 (PVLLVYLYHS…GYYRLTADAH (344 aa)) enclose the FERM domain. Position 119 is a phosphotyrosine; by autocatalysis (Y119). A phosphotyrosine mark is found at Y372 and Y373. Residues 401–482 (HGPISMDFAI…SLKDLLNCYQ (82 aa)) enclose the SH2; atypical domain. The residue at position 523 (S523) is a Phosphoserine. Positions 545–809 (LIFNESLGQG…AIIRDLNSLF (265 aa)) constitute a Protein kinase 1 domain. Residues Y570 and Y813 each carry the phosphotyrosine modification. In terms of domain architecture, Protein kinase 2 spans 849–1126 (LKFLQQLGKG…RDLALRVDQI (278 aa)). 855-863 (LGKGNFGSV) lines the ATP pocket. Y868 bears the Phosphotyrosine; by autocatalysis mark. Residue K882 participates in ATP binding. Y966 and Y972 each carry phosphotyrosine; by autocatalysis. The active-site Proton acceptor is D976. Phosphotyrosine; by autocatalysis is present on residues Y1007 and Y1008.

The protein belongs to the protein kinase superfamily. Tyr protein kinase family. JAK subfamily. As to quaternary structure, interacts with IL23R, SKB1 and STAM2. Interacts with EPOR. Interacts with LYN. Interacts with SIRPA. Interacts with SH2B1. Interacts with TEC. Interacts with IFNGR2 (via intracellular domain). Interacts with LEPR (Isoform B). Interacts with HSP90AB1; promotes functional activation in a heat shock-dependent manner. Interacts with STRA6. Interacts with RHEX; this interaction occurs in a erythropoietin (EPO)-dependent manner. Interacts with ASB2; the interaction targets JAK2 for Notch-induced proteasomal degradation. Mg(2+) serves as cofactor. Autophosphorylated, leading to regulate its activity. Leptin promotes phosphorylation on tyrosine residues, including phosphorylation on Tyr-813. Autophosphorylation on Tyr-119 in response to EPO down-regulates its kinase activity. Autophosphorylation on Tyr-868, Tyr-966 and Tyr-972 in response to growth hormone (GH) are required for maximal kinase activity. Also phosphorylated by TEC. Phosphorylated on tyrosine residues in response to interferon gamma signaling. Phosphorylated on tyrosine residues in response to a signaling cascade that is activated by increased cellular retinol. In terms of processing, undergoes Notch-induced ubiquitination and subsequent proteasomal degradation which is mediated by ASB1 or ASB2, the substrate-recognition components of probable ECS E3 ubiquitin-protein ligase complexes.

Its subcellular location is the endomembrane system. The protein localises to the cytoplasm. It localises to the nucleus. It carries out the reaction L-tyrosyl-[protein] + ATP = O-phospho-L-tyrosyl-[protein] + ADP + H(+). Regulated by autophosphorylation, can both activate or decrease activity. Heme regulates its activity by enhancing the phosphorylation on Tyr-1007 and Tyr-1008. Non-receptor tyrosine kinase involved in various processes such as cell growth, development, differentiation or histone modifications. Mediates essential signaling events in both innate and adaptive immunity. In the cytoplasm, plays a pivotal role in signal transduction via its association with type I receptors such as growth hormone (GHR), prolactin (PRLR), leptin (LEPR), erythropoietin (EPOR), thrombopoietin (THPO); or type II receptors including IFN-alpha, IFN-beta, IFN-gamma and multiple interleukins. Following ligand-binding to cell surface receptors, phosphorylates specific tyrosine residues on the cytoplasmic tails of the receptor, creating docking sites for STATs proteins. Subsequently, phosphorylates the STATs proteins once they are recruited to the receptor. Phosphorylated STATs then form homodimer or heterodimers and translocate to the nucleus to activate gene transcription. For example, cell stimulation with erythropoietin (EPO) during erythropoiesis leads to JAK2 autophosphorylation, activation, and its association with erythropoietin receptor (EPOR) that becomes phosphorylated in its cytoplasmic domain. Then, STAT5 (STAT5A or STAT5B) is recruited, phosphorylated and activated by JAK2. Once activated, dimerized STAT5 translocates into the nucleus and promotes the transcription of several essential genes involved in the modulation of erythropoiesis. Part of a signaling cascade that is activated by increased cellular retinol and that leads to the activation of STAT5 (STAT5A or STAT5B). In addition, JAK2 mediates angiotensin-2-induced ARHGEF1 phosphorylation. Plays a role in cell cycle by phosphorylating CDKN1B. Cooperates with TEC through reciprocal phosphorylation to mediate cytokine-driven activation of FOS transcription. In the nucleus, plays a key role in chromatin by specifically mediating phosphorylation of 'Tyr-41' of histone H3 (H3Y41ph), a specific tag that promotes exclusion of CBX5 (HP1 alpha) from chromatin. Up-regulates the potassium voltage-gated channel activity of KCNA3. The chain is Tyrosine-protein kinase JAK2 from Pongo abelii (Sumatran orangutan).